The sequence spans 197 residues: Holliday junction branch migration complex subunit RuvA (197 aa).

A domain I region spans residues 1-64; the sequence is MYEYIKGTYM…EDFIGLYGFG (64 aa). The tract at residues 65 to 143 is domain II; it reads SKEELELFNK…VNLDEGIQTD (79 aa). Positions 144-149 are flexible linker; sequence SNDIKV. Residues 149-197 are domain III; the sequence is VSSKILEEAKEALMSLGYSEKECEKALKNVEEKESLEIIIKESLKFLMN.

This sequence belongs to the RuvA family. Homotetramer. Forms an RuvA(8)-RuvB(12)-Holliday junction (HJ) complex. HJ DNA is sandwiched between 2 RuvA tetramers; dsDNA enters through RuvA and exits via RuvB. An RuvB hexamer assembles on each DNA strand where it exits the tetramer. Each RuvB hexamer is contacted by two RuvA subunits (via domain III) on 2 adjacent RuvB subunits; this complex drives branch migration. In the full resolvosome a probable DNA-RuvA(4)-RuvB(12)-RuvC(2) complex forms which resolves the HJ.

The protein resides in the cytoplasm. Its function is as follows. The RuvA-RuvB-RuvC complex processes Holliday junction (HJ) DNA during genetic recombination and DNA repair, while the RuvA-RuvB complex plays an important role in the rescue of blocked DNA replication forks via replication fork reversal (RFR). RuvA specifically binds to HJ cruciform DNA, conferring on it an open structure. The RuvB hexamer acts as an ATP-dependent pump, pulling dsDNA into and through the RuvAB complex. HJ branch migration allows RuvC to scan DNA until it finds its consensus sequence, where it cleaves and resolves the cruciform DNA. The protein is Holliday junction branch migration complex subunit RuvA of Hathewaya histolytica (Clostridium histolyticum).